The primary structure comprises 217 residues: Small ribosomal subunit protein uS3 (217 aa).

The region spanning 40–110 (IRELVNKSFT…EVYINIHEVR (71 aa)) is the KH type-2 domain.

The protein belongs to the universal ribosomal protein uS3 family. Part of the 30S ribosomal subunit. Forms a tight complex with proteins S10 and S14.

Its function is as follows. Binds the lower part of the 30S subunit head. Binds mRNA in the 70S ribosome, positioning it for translation. The chain is Small ribosomal subunit protein uS3 from Rickettsia bellii (strain OSU 85-389).